Reading from the N-terminus, the 326-residue chain is 3-methyl-2-oxobutanoate hydroxymethyltransferase 1 (326 aa).

Residues Asp52, Asp91, and Glu122 each contribute to the Mg(2+) site. 3-methyl-2-oxobutanoate-binding positions include 52 to 53 and Asp91; that span reads DS. The Proton acceptor role is filled by Glu189.

This sequence belongs to the PanB family. As to quaternary structure, homodecamer; pentamer of dimers. Requires Mg(2+) as cofactor.

It localises to the cytoplasm. It carries out the reaction 3-methyl-2-oxobutanoate + (6R)-5,10-methylene-5,6,7,8-tetrahydrofolate + H2O = 2-dehydropantoate + (6S)-5,6,7,8-tetrahydrofolate. It functions in the pathway cofactor biosynthesis; (R)-pantothenate biosynthesis; (R)-pantoate from 3-methyl-2-oxobutanoate: step 1/2. In terms of biological role, catalyzes the reversible reaction in which hydroxymethyl group from 5,10-methylenetetrahydrofolate is transferred onto alpha-ketoisovalerate to form ketopantoate. The chain is 3-methyl-2-oxobutanoate hydroxymethyltransferase 1 from Bradyrhizobium diazoefficiens (strain JCM 10833 / BCRC 13528 / IAM 13628 / NBRC 14792 / USDA 110).